Reading from the N-terminus, the 355-residue chain is tRNA uridine(34) hydroxylase (355 aa).

The 95-residue stretch at 146–240 (DDPDTVFVDM…YARQAKAQGL (95 aa)) folds into the Rhodanese domain. Residue cysteine 200 is the Cysteine persulfide intermediate of the active site.

The protein belongs to the TrhO family.

It catalyses the reaction uridine(34) in tRNA + AH2 + O2 = 5-hydroxyuridine(34) in tRNA + A + H2O. Its function is as follows. Catalyzes oxygen-dependent 5-hydroxyuridine (ho5U) modification at position 34 in tRNAs. This Pectobacterium carotovorum subsp. carotovorum (strain PC1) protein is tRNA uridine(34) hydroxylase.